A 248-amino-acid polypeptide reads, in one-letter code: Large ribosomal subunit protein uL30 (248 aa).

The interval 22–42 (KSQEKARAERQAEIEKKKAAN) is disordered. A compositionally biased stretch (basic and acidic residues) spans 24–42 (QEKARAERQAEIEKKKAAN).

It belongs to the universal ribosomal protein uL30 family. In terms of assembly, component of the large ribosomal subunit (LSU). Mature N.crassa ribosomes consist of a small (40S) and a large (60S) subunit. The 40S small subunit contains 1 molecule of ribosomal RNA (18S rRNA) and at least 32 different proteins. The large 60S subunit contains 3 rRNA molecules (26S, 5.8S and 5S rRNA) and at least 42 different proteins.

It is found in the cytoplasm. Its function is as follows. Component of the ribosome, a large ribonucleoprotein complex responsible for the synthesis of proteins in the cell. The small ribosomal subunit (SSU) binds messenger RNAs (mRNAs) and translates the encoded message by selecting cognate aminoacyl-transfer RNA (tRNA) molecules. The large subunit (LSU) contains the ribosomal catalytic site termed the peptidyl transferase center (PTC), which catalyzes the formation of peptide bonds, thereby polymerizing the amino acids delivered by tRNAs into a polypeptide chain. The nascent polypeptides leave the ribosome through a tunnel in the LSU and interact with protein factors that function in enzymatic processing, targeting, and the membrane insertion of nascent chains at the exit of the ribosomal tunnel. This Neurospora crassa (strain ATCC 24698 / 74-OR23-1A / CBS 708.71 / DSM 1257 / FGSC 987) protein is Large ribosomal subunit protein uL30 (rpl-7).